Consider the following 1541-residue polypeptide: WD repeat-containing protein 62 (1541 aa).

An N-acetylalanine modification is found at Ala-2. At Ser-33 the chain carries Phosphoserine. At Thr-46 the chain carries Phosphothreonine. WD repeat units follow at residues 109–150 (TARK…QVAE), 153–194 (GHKY…VVAS), 196–234 (KVSC…EAKV), 291–330 (INLK…YLAN), 357–396 (AVYP…KVGK), 402–450 (FHSS…DSHW), 490–529 (DMKA…ELVR), 532–574 (AHDA…SLEQ), 578–618 (DHSS…DGLH), 626–665 (AEKT…QKKC), 671–713 (GDEG…KMFG), and 714–752 (HSEI…TNCM). Phosphoserine is present on Ser-501. 2 disordered regions span residues 762–820 (REQP…KESL) and 911–1050 (LSQS…LPQT). Positions 770-780 (KDGKWSRDPRQ) are enriched in basic and acidic residues. The segment covering 781–795 (ETCTSMPSEISLSPG) has biased composition (polar residues). The span at 797 to 809 (QTEDELEEECEPE) shows a compositional bias: acidic residues. One copy of the WD 13 repeat lies at 803 to 846 (EEECEPEELLKTPSKESLDSDPRCLLTNGKLPLWAKRLLGDDDV). The span at 810–820 (ELLKTPSKESL) shows a compositional bias: basic and acidic residues. A compositionally biased stretch (low complexity) spans 937-948 (VSELLCSLESEV). Ser-943 carries the phosphoserine modification. A compositionally biased stretch (pro residues) spans 1008 to 1026 (PPRPDPDPPFDVAVPPAPG). Thr-1050 carries the phosphothreonine modification. 3 positions are modified to phosphoserine: Ser-1095, Ser-1125, and Ser-1151. Disordered stretches follow at residues 1133–1153 (LAGS…TSPG) and 1185–1212 (SSSS…QGVH). The stretch at 1138–1180 (PRAEPLRAGTGYTSPGRTNVLSAGKAEEPLEAWSPLTSCLTGL) is one WD 14 repeat. The span at 1193–1202 (DKTPPTPTAL) shows a compositional bias: pro residues. 3 positions are modified to phosphoserine: Ser-1235, Ser-1255, and Ser-1256. The disordered stretch occupies residues 1273–1293 (TVTPSSDSEGQEPALPSRGNH). Thr-1275 is subject to Phosphothreonine.

Can form homodimers (via C-terminus). Interacts (via C-terminus) with MAPKBP1 (via C-terminus). Interacts with CDK5RAP2, CEP152, CEP63 and KIAA0753. CEP63, CDK5RAP2, CEP152, WDR62 are proposed to form a stepwise assembled complex at the centrosome forming a ring near parental centrioles.

It localises to the nucleus. It is found in the cytoplasm. The protein resides in the cytoskeleton. The protein localises to the spindle pole. Its subcellular location is the microtubule organizing center. It localises to the centrosome. It is found in the centriole. Required for cerebral cortical development. Plays a role in neuronal proliferation and migration. Plays a role in mother-centriole-dependent centriole duplication; the function seems also to involve CEP152, CDK5RAP2 and CEP63 through a stepwise assembled complex at the centrosome that recruits CDK2 required for centriole duplication. This chain is WD repeat-containing protein 62 (WDR62), found in Sus scrofa (Pig).